A 26-amino-acid polypeptide reads, in one-letter code: AMP deaminase 1 (26 aa).

Belongs to the metallo-dependent hydrolases superfamily. Adenosine and AMP deaminases family. As to quaternary structure, homotetramer.

The catalysed reaction is AMP + H2O + H(+) = IMP + NH4(+). It participates in purine metabolism; IMP biosynthesis via salvage pathway; IMP from AMP: step 1/1. In terms of biological role, AMP deaminase plays a critical role in energy metabolism. The sequence is that of AMP deaminase 1 (AMPD1) from Gallus gallus (Chicken).